A 125-amino-acid chain; its full sequence is Protein ApaG (125 aa).

In terms of domain architecture, ApaG spans 1-125 (MIEQPRICVQ…FRLAIPALIH (125 aa)).

This is Protein ApaG from Yersinia pseudotuberculosis serotype IB (strain PB1/+).